We begin with the raw amino-acid sequence, 219 residues long: Izumo sperm-egg fusion protein 4 (219 aa).

An N-terminal signal peptide occupies residues 1-15 (MALLLCLVGVTAALA). An N-linked (GlcNAc...) asparagine glycan is attached at N206.

Belongs to the Izumo family.

The protein localises to the secreted. The chain is Izumo sperm-egg fusion protein 4 (IZUMO4) from Macaca fascicularis (Crab-eating macaque).